The primary structure comprises 475 residues: Tetratricopeptide repeat protein 29 (475 aa).

TPR repeat units follow at residues 92-131, 136-173, 182-215, 234-267, 274-307, 314-347, and 354-387; these read DALR…EDAE, FEDV…AQLI, AEAH…TQGR, LRTY…AKEG, AEAS…STDL, GRGY…ARNN, and VRAS…TVEL. Residues 437-475 form a disordered region; sequence IEPDPVTEEFRGSTVEAVSQNSERLEELSRFPGDQKNET. The span at 459–475 shows a compositional bias: basic and acidic residues; the sequence is ERLEELSRFPGDQKNET.

As to expression, expressed in spermatozoa (at protein level).

It is found in the cytoplasm. Its subcellular location is the cytoskeleton. The protein localises to the flagellum axoneme. Functionally, axonemal protein which is implicated in axonemal and/or peri-axonemal structure assembly and regulates flagellum assembly and beating and therefore sperm motility. This Homo sapiens (Human) protein is Tetratricopeptide repeat protein 29 (TTC29).